The sequence spans 481 residues: 3-isopropylmalate dehydratase large subunit (481 aa).

3 residues coordinate [4Fe-4S] cluster: C363, C423, and C426. Positions 432 to 459 (DQLKPGERSASTSNRNFEGRQGPGGRTH) are disordered.

This sequence belongs to the aconitase/IPM isomerase family. LeuC type 1 subfamily. Heterodimer of LeuC and LeuD. [4Fe-4S] cluster is required as a cofactor.

The enzyme catalyses (2R,3S)-3-isopropylmalate = (2S)-2-isopropylmalate. The protein operates within amino-acid biosynthesis; L-leucine biosynthesis; L-leucine from 3-methyl-2-oxobutanoate: step 2/4. In terms of biological role, catalyzes the isomerization between 2-isopropylmalate and 3-isopropylmalate, via the formation of 2-isopropylmaleate. The chain is 3-isopropylmalate dehydratase large subunit from Corynebacterium glutamicum (strain R).